Reading from the N-terminus, the 318-residue chain is tRNA pseudouridine synthase B (318 aa).

Residue Asp-47 is the Nucleophile of the active site.

This sequence belongs to the pseudouridine synthase TruB family. Type 1 subfamily.

The catalysed reaction is uridine(55) in tRNA = pseudouridine(55) in tRNA. Functionally, responsible for synthesis of pseudouridine from uracil-55 in the psi GC loop of transfer RNAs. The chain is tRNA pseudouridine synthase B from Shewanella putrefaciens (strain CN-32 / ATCC BAA-453).